Here is a 409-residue protein sequence, read N- to C-terminus: MATHVAIIGNGVGGFTTAQALRAEGFEGRISLIGDEPHLPYDRPSLSKAVLDGSLERPPILAEADWYGEARIDMLTGPEVTALDVQTRTISLDDGTTLSADAIVIATGSRARTMALPGSQLPGVVTLRTYGDVQVLRDSWTSATRLLIVGGGLIGCEVATTARKLGLSVTILEAGDELLVRVLGRRIGAWLRGLLTELGVQVELGTGVVGFSGEGQLEQVMASDGRSFVADSALICVGAEPADQLARQAGLACDRGVIVDHCGATLAKGYSPSEMWPVGAAAGGRRSLETYMNAQRQAAAVAAAILGKNVSAPQLPVSWTEIAGHRMQMAGDIEGPGDFVSRGMPGSGAALLFRLQERRIQAVVAVDAPRDFALATRLVEARAAIEPARLADLSNSMRDFVRANEGDLT.

Residue 4–35 participates in FAD binding; the sequence is HVAIIGNGVGGFTTAQALRAEGFEGRISLIGD. Position 145-173 (145-173) interacts with NAD(+); that stretch reads RLLIVGGGLIGCEVATTARKLGLSVTILE.

This sequence belongs to the bacterial ring-hydroxylating dioxygenase ferredoxin reductase family. As to quaternary structure, this dioxygenase system consists of four proteins: the two subunits of the hydroxylase component (todC1 and todC2), a ferredoxin (TodB) and a ferredoxin reductase (TodA). It depends on FAD as a cofactor.

It carries out the reaction 2 reduced [2Fe-2S]-[ferredoxin] + NAD(+) + H(+) = 2 oxidized [2Fe-2S]-[ferredoxin] + NADH. It participates in xenobiotic degradation; toluene degradation. Functionally, part of the electron transfer component of toluene 1,2-dioxygenase, transfers electrons from ferredoxin (TodB) to NADH. The polypeptide is Toluene 1,2-dioxygenase system ferredoxin--NAD(+) reductase component (todA) (Pseudomonas putida (Arthrobacter siderocapsulatus)).